The following is a 247-amino-acid chain: PF03932 family protein CutC (247 aa).

The protein belongs to the CutC family.

The protein localises to the cytoplasm. The chain is PF03932 family protein CutC from Klebsiella pneumoniae subsp. pneumoniae (strain ATCC 700721 / MGH 78578).